The sequence spans 139 residues: Nucleoside diphosphate kinase (139 aa).

Residues Lys10, Phe58, Arg86, Thr92, Arg104, and Asn114 each coordinate ATP. Catalysis depends on His117, which acts as the Pros-phosphohistidine intermediate.

It belongs to the NDK family. Homotetramer. Requires Mg(2+) as cofactor.

The protein localises to the cytoplasm. The catalysed reaction is a 2'-deoxyribonucleoside 5'-diphosphate + ATP = a 2'-deoxyribonucleoside 5'-triphosphate + ADP. The enzyme catalyses a ribonucleoside 5'-diphosphate + ATP = a ribonucleoside 5'-triphosphate + ADP. Functionally, major role in the synthesis of nucleoside triphosphates other than ATP. The ATP gamma phosphate is transferred to the NDP beta phosphate via a ping-pong mechanism, using a phosphorylated active-site intermediate. The sequence is that of Nucleoside diphosphate kinase from Rhodococcus erythropolis (strain PR4 / NBRC 100887).